An 80-amino-acid polypeptide reads, in one-letter code: Translation initiation factor IF-1, chloroplastic (80 aa).

The region spanning 1 to 74 (MKEQKWIHEG…TRGRIIYRLR (74 aa)) is the S1-like domain.

The protein belongs to the IF-1 family. In terms of assembly, component of the 30S ribosomal translation pre-initiation complex which assembles on the 30S ribosome in the order IF-2 and IF-3, IF-1 and N-formylmethionyl-tRNA(fMet); mRNA recruitment can occur at any time during PIC assembly.

The protein localises to the plastid. It localises to the chloroplast. In terms of biological role, one of the essential components for the initiation of protein synthesis. Stabilizes the binding of IF-2 and IF-3 on the 30S subunit to which N-formylmethionyl-tRNA(fMet) subsequently binds. Helps modulate mRNA selection, yielding the 30S pre-initiation complex (PIC). Upon addition of the 50S ribosomal subunit IF-1, IF-2 and IF-3 are released leaving the mature 70S translation initiation complex. The polypeptide is Translation initiation factor IF-1, chloroplastic (Illicium oligandrum (Star anise)).